The chain runs to 28 residues: Mu-theraphotoxin-Hsp1a (28 aa).

3 disulfide bridges follow: cysteine 2-cysteine 16, cysteine 9-cysteine 21, and cysteine 15-cysteine 25. Position 28 is an asparagine amide (asparagine 28).

It belongs to the neurotoxin 30 (phrixotoxin) family. As to expression, expressed by the venom gland.

The protein localises to the secreted. Its function is as follows. Potent and selective inhibitor of Nav1.7/SCN9A sodium channels. Inhibits Nav1.7/SCN9A peak current (IC(50)=13 nM). In vivo, does not induce visible signs of toxicity when intravenously injected into mice. The sequence is that of Mu-theraphotoxin-Hsp1a from Homoeomma sp. (Peruvian tarantula).